Consider the following 419-residue polypeptide: Tyrosine--tRNA ligase (419 aa).

Tyr-34 contacts L-tyrosine. The short motif at 39-48 (PSGDSMHIGH) is the 'HIGH' region element. 2 residues coordinate L-tyrosine: Tyr-168 and Gln-172. The 'KMSKS' region signature appears at 230-234 (KFGKS). Lys-233 is a binding site for ATP. In terms of domain architecture, S4 RNA-binding spans 352 to 418 (ANLVDWLVTL…GKKKYFLVSY (67 aa)).

This sequence belongs to the class-I aminoacyl-tRNA synthetase family. TyrS type 1 subfamily. As to quaternary structure, homodimer.

Its subcellular location is the cytoplasm. It carries out the reaction tRNA(Tyr) + L-tyrosine + ATP = L-tyrosyl-tRNA(Tyr) + AMP + diphosphate + H(+). Functionally, catalyzes the attachment of tyrosine to tRNA(Tyr) in a two-step reaction: tyrosine is first activated by ATP to form Tyr-AMP and then transferred to the acceptor end of tRNA(Tyr). The polypeptide is Tyrosine--tRNA ligase (Listeria monocytogenes serotype 4b (strain CLIP80459)).